A 306-amino-acid chain; its full sequence is Mitochondrial substrate carrier family protein ucpA (306 aa).

Topologically, residues Met1 to Val15 are mitochondrial intermembrane. Solcar repeat units follow at residues Asn13 to Ala103, Tyr112 to Leu204, and Asp211 to Leu301. A helical membrane pass occupies residues Ala16–Ile36. The Mitochondrial matrix portion of the chain corresponds to Glu37–Tyr83. A helical membrane pass occupies residues Phe84–Ala103. Residues Leu104–Asn117 lie on the Mitochondrial intermembrane side of the membrane. A helical transmembrane segment spans residues Leu118–Val138. At Lys139–Lys174 the chain is on the mitochondrial matrix side. The chain crosses the membrane as a helical span at residues Gly175–Leu195. The Mitochondrial intermembrane portion of the chain corresponds to Ser196–Asp211. Residues Gly212–Asn232 traverse the membrane as a helical segment. At Pro233–Gly276 the chain is on the mitochondrial matrix side. The chain crosses the membrane as a helical span at residues Phe277–Trp295. Topologically, residues Glu296 to Leu306 are mitochondrial intermembrane.

The protein belongs to the mitochondrial carrier (TC 2.A.29) family.

The protein localises to the mitochondrion inner membrane. In terms of biological role, mitochondrial solute carriers shuttle metabolites, nucleotides, and cofactors through the mitochondrial inner membrane. Transports oxaloacetate and sulfate. This is Mitochondrial substrate carrier family protein ucpA (ucpA) from Dictyostelium discoideum (Social amoeba).